The sequence spans 486 residues: Aspartyl/glutamyl-tRNA(Asn/Gln) amidotransferase subunit B (486 aa).

The protein belongs to the GatB/GatE family. GatB subfamily. In terms of assembly, heterotrimer of A, B and C subunits.

The catalysed reaction is L-glutamyl-tRNA(Gln) + L-glutamine + ATP + H2O = L-glutaminyl-tRNA(Gln) + L-glutamate + ADP + phosphate + H(+). It carries out the reaction L-aspartyl-tRNA(Asn) + L-glutamine + ATP + H2O = L-asparaginyl-tRNA(Asn) + L-glutamate + ADP + phosphate + 2 H(+). In terms of biological role, allows the formation of correctly charged Asn-tRNA(Asn) or Gln-tRNA(Gln) through the transamidation of misacylated Asp-tRNA(Asn) or Glu-tRNA(Gln) in organisms which lack either or both of asparaginyl-tRNA or glutaminyl-tRNA synthetases. The reaction takes place in the presence of glutamine and ATP through an activated phospho-Asp-tRNA(Asn) or phospho-Glu-tRNA(Gln). This chain is Aspartyl/glutamyl-tRNA(Asn/Gln) amidotransferase subunit B, found in Leptospira borgpetersenii serovar Hardjo-bovis (strain L550).